Consider the following 255-residue polypeptide: PABIR family member 2 (255 aa).

A disordered region spans residues 1 to 24 (MAQEKMDLDFEADTSEGATLRRSN). Residue A2 is modified to N-acetylalanine. Phosphoserine is present on residues S25, S33, S50, and S58. Residue T112 is modified to Phosphothreonine. Residues S115 and S119 each carry the phosphoserine modification. The residue at position 122 (R122) is an Omega-N-methylarginine. S145 carries the post-translational modification Phosphoserine. 2 disordered regions span residues 169 to 196 (LGPL…SMLS) and 219 to 238 (SGLS…SPVA). Basic and acidic residues predominate over residues 174 to 184 (RKGEMEMESQP).

It belongs to the FAM122 family.

The chain is PABIR family member 2 from Mus musculus (Mouse).